The sequence spans 137 residues: Small ribosomal subunit protein uS12 (137 aa).

Residues 1–26 (MPTINQLVRKPRQSKIKKSTSPALNK) are disordered. Residues 9–18 (RKPRQSKIKK) show a composition bias toward basic residues.

It belongs to the universal ribosomal protein uS12 family. In terms of assembly, part of the 30S ribosomal subunit. Contacts proteins S8 and S17. May interact with IF1 in the 30S initiation complex.

In terms of biological role, with S4 and S5 plays an important role in translational accuracy. Its function is as follows. Interacts with and stabilizes bases of the 16S rRNA that are involved in tRNA selection in the A site and with the mRNA backbone. Located at the interface of the 30S and 50S subunits, it traverses the body of the 30S subunit contacting proteins on the other side and probably holding the rRNA structure together. The combined cluster of proteins S8, S12 and S17 appears to hold together the shoulder and platform of the 30S subunit. This Listeria innocua serovar 6a (strain ATCC BAA-680 / CLIP 11262) protein is Small ribosomal subunit protein uS12.